Here is a 256-residue protein sequence, read N- to C-terminus: Type III pantothenate kinase (256 aa).

ATP is bound at residue 6-13; the sequence is DVGNTNMV. Substrate is bound by residues Tyr-100 and 107–110; that span reads GADR. Asp-109 functions as the Proton acceptor in the catalytic mechanism. Asp-129 provides a ligand contact to K(+). Thr-132 is an ATP binding site. Thr-184 contacts substrate.

Belongs to the type III pantothenate kinase family. In terms of assembly, homodimer. The cofactor is NH4(+). Requires K(+) as cofactor.

It localises to the cytoplasm. It carries out the reaction (R)-pantothenate + ATP = (R)-4'-phosphopantothenate + ADP + H(+). The protein operates within cofactor biosynthesis; coenzyme A biosynthesis; CoA from (R)-pantothenate: step 1/5. Its function is as follows. Catalyzes the phosphorylation of pantothenate (Pan), the first step in CoA biosynthesis. The protein is Type III pantothenate kinase of Clostridioides difficile (strain 630) (Peptoclostridium difficile).